We begin with the raw amino-acid sequence, 131 residues long: Glycine cleavage system H protein (131 aa).

The region spanning 24 to 106 (RAIVGISDHA…YGEGWIMVIE (83 aa)) is the Lipoyl-binding domain. Residue Lys-65 is modified to N6-lipoyllysine.

The protein belongs to the GcvH family. As to quaternary structure, the glycine cleavage system is composed of four proteins: P, T, L and H. (R)-lipoate serves as cofactor.

Functionally, the glycine cleavage system catalyzes the degradation of glycine. The H protein shuttles the methylamine group of glycine from the P protein to the T protein. In Xylella fastidiosa (strain 9a5c), this protein is Glycine cleavage system H protein.